The sequence spans 653 residues: Multidomain regulatory protein Rv1364c (653 aa).

Residues Thr-54 and Thr-81 each carry the phosphothreonine; by PknD modification. Residues Ser-86–Ala-142 form the PAC domain. A PPM-type phosphatase domain is found at Asp-177 to Arg-396. The Mn(2+) site is built by Asp-211 and Val-212. Residue Thr-299 is modified to Phosphothreonine; by PknD. Mn(2+)-binding residues include Asp-328 and Asp-387. Residue Thr-390 is modified to Phosphothreonine; by PknD. Residues Arg-397–Gln-544 are anti-sigma factor kinase region. Position 506 is a phosphoserine; by PknD (Ser-506). Residues Thr-520 and Thr-568 each carry the phosphothreonine; by PknD modification. The STAS domain occupies Ile-546–Glu-653. A Phosphoserine; by autocatalysis modification is found at Ser-600.

As to quaternary structure, exists in solution as both monomer and dimer. Both the phosphorylated and unphosphorylated proteins form extended dimers. Interacts with SigF. Can efficiently bind to SigF independently of its autophosphorylation. Interaction between SigF and Rv1364c is reduced significantly upon the phosphorylation of both proteins by PknD. Requires Mn(2+) as cofactor. Mg(2+) serves as cofactor. Autophosphorylated. Phosphorylated by PknD on multiple threonine and serine residues. Phosphorylation is antagonized by the phosphatase activity.

It carries out the reaction O-phospho-L-seryl-[protein] + H2O = L-seryl-[protein] + phosphate. The catalysed reaction is O-phospho-L-threonyl-[protein] + H2O = L-threonyl-[protein] + phosphate. It catalyses the reaction L-seryl-[protein] + ATP = O-phospho-L-seryl-[protein] + ADP + H(+). The enzyme catalyses L-threonyl-[protein] + ATP = O-phospho-L-threonyl-[protein] + ADP + H(+). The phosphatase domain is activated by the anti-sigma factor kinase domain. Its function is as follows. Primarily acts as an independent SigF regulator that is sensitive to the osmosensory signal, mediating the cross talk of PknD with the SigF regulon. Possesses both phosphatase and kinase activities. The kinase domain functions as a classic anti-sigma factor-like kinase to phosphorylate the anti-anti-sigma factor domain at the canonical regulatory site, and the phosphatase domain antagonizes this activity. The polypeptide is Multidomain regulatory protein Rv1364c (Mycobacterium tuberculosis (strain ATCC 25618 / H37Rv)).